The sequence spans 239 residues: Small ribosomal subunit protein uS2 (239 aa).

Belongs to the universal ribosomal protein uS2 family.

The protein is Small ribosomal subunit protein uS2 of Histophilus somni (strain 129Pt) (Haemophilus somnus).